Here is a 210-residue protein sequence, read N- to C-terminus: Shikimate kinase (210 aa).

An ATP-binding site is contributed by 34–39; sequence GAGKSV. S38 lines the Mg(2+) pocket. D56, R80, and G102 together coordinate substrate. Position 140 (R140) interacts with ATP. Position 159 (R159) interacts with substrate.

This sequence belongs to the shikimate kinase family. As to quaternary structure, monomer. It depends on Mg(2+) as a cofactor.

The protein resides in the cytoplasm. It catalyses the reaction shikimate + ATP = 3-phosphoshikimate + ADP + H(+). It participates in metabolic intermediate biosynthesis; chorismate biosynthesis; chorismate from D-erythrose 4-phosphate and phosphoenolpyruvate: step 5/7. Functionally, catalyzes the specific phosphorylation of the 3-hydroxyl group of shikimic acid using ATP as a cosubstrate. This chain is Shikimate kinase, found in Bartonella quintana (strain Toulouse) (Rochalimaea quintana).